Reading from the N-terminus, the 336-residue chain is Foldase protein PrsA (336 aa).

An N-terminal signal peptide occupies residues 1–22; it reads MKSAKKLLSVLCLGIFILTFTA. Residue Cys23 is the site of N-palmitoyl cysteine attachment. A lipid anchor (S-diacylglycerol cysteine) is attached at Cys23. Positions 194-286 constitute a PpiC domain; the sequence is PNTMNVSHIL…FGYHIIKINS (93 aa).

The protein belongs to the PrsA family.

It is found in the cell membrane. The enzyme catalyses [protein]-peptidylproline (omega=180) = [protein]-peptidylproline (omega=0). Plays a major role in protein secretion by helping the post-translocational extracellular folding of several secreted proteins. The protein is Foldase protein PrsA of Clostridium botulinum (strain Kyoto / Type A2).